A 250-amino-acid chain; its full sequence is DNA repair protein RecO (250 aa).

The protein belongs to the RecO family.

Functionally, involved in DNA repair and RecF pathway recombination. The protein is DNA repair protein RecO of Lactobacillus helveticus (strain DPC 4571).